Reading from the N-terminus, the 283-residue chain is Shikimate kinase (283 aa).

Position 86 to 96 (86 to 96 (PIKSGLSSSSA)) interacts with ATP.

Belongs to the GHMP kinase family. Archaeal shikimate kinase subfamily.

It localises to the cytoplasm. It carries out the reaction shikimate + ATP = 3-phosphoshikimate + ADP + H(+). It participates in metabolic intermediate biosynthesis; chorismate biosynthesis; chorismate from D-erythrose 4-phosphate and phosphoenolpyruvate: step 5/7. This is Shikimate kinase from Methanococcus maripaludis (strain C5 / ATCC BAA-1333).